Here is a 105-residue protein sequence, read N- to C-terminus: UPF0235 protein A1C_06510 (105 aa).

Belongs to the UPF0235 family.

The protein is UPF0235 protein A1C_06510 of Rickettsia akari (strain Hartford).